Consider the following 219-residue polypeptide: Orotate phosphoribosyltransferase (219 aa).

Residue lysine 26 participates in 5-phospho-alpha-D-ribose 1-diphosphate binding. Residue 34 to 35 participates in orotate binding; it reads FF. Residues 72 to 73, arginine 98, lysine 99, lysine 102, histidine 104, and 124 to 132 contribute to the 5-phospho-alpha-D-ribose 1-diphosphate site; these read YK and DDVITAGTA. Orotate-binding residues include threonine 128 and arginine 156.

It belongs to the purine/pyrimidine phosphoribosyltransferase family. PyrE subfamily. In terms of assembly, homodimer. Requires Mg(2+) as cofactor.

The enzyme catalyses orotidine 5'-phosphate + diphosphate = orotate + 5-phospho-alpha-D-ribose 1-diphosphate. It functions in the pathway pyrimidine metabolism; UMP biosynthesis via de novo pathway; UMP from orotate: step 1/2. In terms of biological role, catalyzes the transfer of a ribosyl phosphate group from 5-phosphoribose 1-diphosphate to orotate, leading to the formation of orotidine monophosphate (OMP). This Xanthomonas axonopodis pv. citri (strain 306) protein is Orotate phosphoribosyltransferase.